A 285-amino-acid chain; its full sequence is MDVCAASFPLLVLNSVHSTTGARAQFTPAAVEARVKVPVTATVRFCVSRRNRCVHGNIDCHKFACNPTSEDELEPDNYTVNAEFFKTKVAAKKELRKTRHSAASDSDTDDDEAEFVKQKLRRHFDGEDSCDVELYSCRMSVFAIDDMFEHDVYNALNRGVDYRTACKWDTRQTDVFEFRENFCSLDTITDIVFNWLSVTSNDNFTILFKNSSNALWKTLANNNLITVTVNKNETPVMLTSNEFPEATLFEVLDKMRQIVLAQLYHRVDCDANEAVATFAFDLFLK.

The sequence is that of OPEP-3 protein (OPEP-3) from Orgyia pseudotsugata multicapsid polyhedrosis virus (OpMNPV).